The chain runs to 276 residues: Streptothricin hydrolase (276 aa).

Residue Cys176 is the Nucleophile of the active site. A disordered region spans residues 250–276 (PEAPAAAAAPAAGTGLSPAGPPPAPAR). The segment covering 252–267 (APAAAAAPAAGTGLSP) has biased composition (low complexity).

The protein belongs to the isochorismatase family. Homodimer. It depends on Does not require a metal cofactor. as a cofactor.

It catalyses the reaction streptothricin F + H2O = streptothricin F acid. Its function is as follows. Catalyzes the hydrolysis of the amide bond of streptolidine lactam, thereby conferring streptothricin (ST) resistance. Can hydrolyze streptothricin-F and streptothricin-D. However, this strain is believed to be a ST nonproducer, which raises the possibility that its true role may not be its involvement in self-resistance to STs. May catalyze the hydrolysis of naturally occurring cyclic amide compounds that are structurally related to STs. The polypeptide is Streptothricin hydrolase (sttH) (Streptomyces noursei (Streptomyces albulus)).